The primary structure comprises 2167 residues: Glutamate synthase 1 [NADH], chloroplastic (2167 aa).

A disordered region spans residues 1 to 31 (MSAAQGMAYKLRTDAAPTGAGRRARRSHSSV). The transit peptide at 1-36 (MSAAQGMAYKLRTDAAPTGAGRRARRSHSSVAAPYR) directs the protein to the chloroplast. Cys100 functions as the Nucleophile in the catalytic mechanism. In terms of domain architecture, Glutamine amidotransferase type-2 spans 100–504 (CGVGFVAELS…PGMMLLVDFE (405 aa)). The tract at residues 1022–1042 (KSNTGEGGEQPSRMEPLANGS) is disordered. Position 1192 to 1249 (1192 to 1249 (LAETHQTLVANGLRGRAILQTDGQLKTGKDVAVACLLGAEEFGFSTAPLITLGCIMMR)) interacts with FMN. [3Fe-4S] cluster contacts are provided by Cys1245, Cys1251, and Cys1256. NAD(+) is bound at residue 1956-1970 (GGGDTGTDCIGTSIR).

Belongs to the glutamate synthase family. As to quaternary structure, monomer. The cofactor is [3Fe-4S] cluster. FAD serves as cofactor. Requires FMN as cofactor. Highly expressed in roots.

The protein resides in the plastid. It localises to the chloroplast. It catalyses the reaction 2 L-glutamate + NAD(+) = L-glutamine + 2-oxoglutarate + NADH + H(+). The protein operates within amino-acid biosynthesis; L-glutamate biosynthesis via GLT pathway; L-glutamate from 2-oxoglutarate and L-glutamine (NAD(+) route): step 1/1. It participates in energy metabolism; nitrogen metabolism. Functionally, involved in glutamate biosynthesis and plays a major role in the primary ammonium ions assimilation in seedling roots. May be involved in the reutilization of glutamine in developing organs. Plays a role in the development of tillers. The chain is Glutamate synthase 1 [NADH], chloroplastic from Oryza sativa subsp. japonica (Rice).